Reading from the N-terminus, the 124-residue chain is uncharacterized protein (124 aa).

This is an uncharacterized protein from Bacillus subtilis (strain 168).